The following is a 1190-amino-acid chain: Tight junction protein 2 (1190 aa).

Ser16 is modified (phosphoserine). Residues 33–120 (TVTLQKDSKR…VAAIVVKRPR (88 aa)) form the PDZ 1 domain. 20 positions are modified to phosphoserine: Ser130, Ser150, Ser153, Ser163, Ser168, Ser170, Ser174, Ser200, Ser220, Ser232, Ser244, Ser266, Ser325, Ser398, Ser400, Ser406, Ser415, Ser424, Ser430, and Ser431. Residues 152–306 (RSGYSERSRL…PEPRGRPGPI (155 aa)) are disordered. The segment covering 169–291 (RSWEDSPERG…PRSRSREHPH (123 aa)) has biased composition (basic and acidic residues). The 79-residue stretch at 307–385 (GVLLMKSRAN…KLQLVVLRDS (79 aa)) folds into the PDZ 2 domain. The disordered stretch occupies residues 408–506 (IESNRSFSPE…RPSPEDEAIY (99 aa)). Over residues 415–446 (SPEERRHQYSDYDYHSSSEKLKERPSSREDTP) the composition is skewed to basic and acidic residues. Residue Thr455 is modified to Phosphothreonine. Ser499 carries the post-translational modification Phosphoserine. The PDZ 3 domain occupies 509 to 590 (NTKMVRFKKG…GEMVTILAQS (82 aa)). A Phosphotyrosine modification is found at Tyr574. The region spanning 604-669 (GDSFFIRSHF…PNKSRAEQMA (66 aa)) is the SH3 domain. The region spanning 678–876 (NAGDRADFWR…WFGSLKDTIQ (199 aa)) is the Guanylate kinase-like domain. Residues Ser702 and Ser902 each carry the phosphoserine modification. Phosphothreonine is present on Thr905. Phosphoserine occurs at positions 913 and 920. Disordered stretches follow at residues 920–1079 (SDFE…KSVL) and 1105–1190 (NARI…DTEL). Phosphothreonine is present on residues Thr925 and Thr933. Residues 956–967 (VQHEESIRKPSP) are compositionally biased toward basic and acidic residues. Residues Ser966, Ser978, Ser986, Ser1006, Ser1067, and Ser1068 each carry the phosphoserine modification. A compositionally biased stretch (basic and acidic residues) spans 994 to 1014 (EPPKAKTQNKEESYDFSKSYE). Residues 1060-1072 (EGEEVGESSEEQD) are compositionally biased toward acidic residues. Tyr1118 carries the post-translational modification Phosphotyrosine. Phosphothreonine is present on Thr1131. Phosphoserine is present on residues Ser1147 and Ser1159. The span at 1166–1175 (YRQQLSEHSK) shows a compositional bias: basic and acidic residues. Residues 1188–1190 (TEL) form an interaction with SCRIB region.

It belongs to the MAGUK family. As to quaternary structure, homodimer. Interacts (via PDZ2 domain) with TJP1/ZO1 (via PDZ2 domain). Interacts with OCLN. Interacts with UBN1. Interacts with SAFB in the nucleus. Interacts with SCRIB. Interacts with USP53 (via the C-terminal region). Interacts with claudins, including CLDN1, CLDN2, CLDN3, CLDN5 and CLDN7. Interacts with CLDN18. Interacts (via N-terminus) with CTNNA1. As to expression, this protein is found in epithelial cell junctions. Isoform A1 is abundant in the heart and brain. Detected in brain and skeletal muscle. It is present almost exclusively in normal tissues. Isoform C1 is expressed at high level in the kidney, pancreas, heart and placenta. Not detected in brain and skeletal muscle. Found in normal as well as in most neoplastic tissues.

It is found in the cell junction. The protein localises to the adherens junction. Its subcellular location is the cell membrane. The protein resides in the tight junction. It localises to the nucleus. In terms of biological role, plays a role in tight junctions and adherens junctions. Acts as a positive regulator of RANKL-induced osteoclast differentiation, potentially via mediating downstream transcriptional activity. The protein is Tight junction protein 2 of Homo sapiens (Human).